The primary structure comprises 49 residues: MHQSQPQQQIEEYKQIKKLLFLVGLTIGKMATSRILSFLGFINCEIKLK.

Residues 20-42 (LFLVGLTIGKMATSRILSFLGFI) form a helical membrane-spanning segment.

It localises to the membrane. This is an uncharacterized protein from Dictyostelium discoideum (Social amoeba).